The following is a 360-amino-acid chain: Peptide chain release factor 1 (360 aa).

An N5-methylglutamine modification is found at Gln235. The interval 285 to 314 (KRQQAEASTRRNLLGSGDRSDRNRTYNFPQ) is disordered.

The protein belongs to the prokaryotic/mitochondrial release factor family. In terms of processing, methylated by PrmC. Methylation increases the termination efficiency of RF1.

The protein localises to the cytoplasm. In terms of biological role, peptide chain release factor 1 directs the termination of translation in response to the peptide chain termination codons UAG and UAA. The polypeptide is Peptide chain release factor 1 (Klebsiella pneumoniae subsp. pneumoniae (strain ATCC 700721 / MGH 78578)).